We begin with the raw amino-acid sequence, 716 residues long: Tensin-4 (716 aa).

Residues 1 to 17 (MSQVMSSPLLAGGPAVG) form the signal peptide. Disordered stretches follow at residues 119 to 274 (LPPG…VSML), 301 to 322 (QSSS…NLGP), 334 to 366 (VPSN…PSIT), and 379 to 436 (GFPE…RDMQ). The segment covering 138–150 (KKKEEPEALDIKY) has biased composition (basic and acidic residues). Polar residues predominate over residues 197–206 (SSESLIFSGS). A compositionally biased stretch (pro residues) spans 214–228 (PAPPSAVPSSHPPTS). S248 carries the post-translational modification Phosphoserine. Residues 265–274 (PQLSSRVSML) are compositionally biased toward polar residues. Over residues 402–419 (ATSSSMPCPATRSHSQTL) the composition is skewed to polar residues. Positions 449–556 (WFKPSISREQ…ALPCKLVIPQ (108 aa)) constitute an SH2 domain. The 122-residue stretch at 583-704 (CHALYLSSVS…TLQPASQVIR (122 aa)) folds into the PTB domain.

The protein belongs to the PTEN phosphatase protein family. As to quaternary structure, interacts (via SH2 domain) with Rho GTPase-activating protein DLC1 (via C-terminus); the interaction is independent of DLC1 tyrosine phosphorylation. Interacts with integrin ITGB1; the interaction displaces tensin TNS3 from the ITGB1 cytoplasmic tail and promotes ITGB1 stability. Interacts (via SH2 domain) with E3 ubiquitin-protein ligase CBL (phosphorylated on 'Tyr-782'); the interaction is enhanced in the presence of EGF and reduces interaction of CBL with EGFR. Interacts (via SH2 domain) with receptor tyrosine kinase MET (when phosphorylated); the interaction increases MET protein stability.

The protein localises to the cell junction. It localises to the focal adhesion. It is found in the cytoplasm. Its subcellular location is the cytoskeleton. Promotes EGF-induced cell migration by displacing tensin TNS3 from the cytoplasmic tail of integrin ITGB1 which results in dissociation of TNS3 from focal adhesions, disassembly of actin stress fibers and initiation of cell migration. Suppresses ligand-induced degradation of EGFR by reducing EGFR ubiquitination in the presence of EGF. Increases MET protein stability by inhibiting MET endocytosis and subsequent lysosomal degradation which leads to increased cell survival, proliferation and migration. This Bos taurus (Bovine) protein is Tensin-4 (TNS4).